The chain runs to 311 residues: Solute carrier family 25 member 48 (311 aa).

Solcar repeat units follow at residues 3 to 86 (NFQL…TQRF), 100 to 205 (PHVL…LSDW), and 214 to 301 (PSPC…SLQA). The next 6 helical transmembrane spans lie at 9-29 (FVAG…LDTV), 61-81 (GMSF…GVFS), 107-127 (LLAS…VDLI), 193-213 (CLYF…ACAG), 217-237 (CAVW…ATPM), and 277-295 (ITVN…FLGY).

Belongs to the mitochondrial carrier (TC 2.A.29) family.

The protein localises to the mitochondrion inner membrane. This is Solute carrier family 25 member 48 (SLC25A48) from Bos taurus (Bovine).